Reading from the N-terminus, the 348-residue chain is Protein RecA (348 aa).

67–74 (GPESSGKT) is a binding site for ATP.

Belongs to the RecA family.

The protein localises to the cytoplasm. In terms of biological role, can catalyze the hydrolysis of ATP in the presence of single-stranded DNA, the ATP-dependent uptake of single-stranded DNA by duplex DNA, and the ATP-dependent hybridization of homologous single-stranded DNAs. It interacts with LexA causing its activation and leading to its autocatalytic cleavage. The sequence is that of Protein RecA from Salinispora tropica (strain ATCC BAA-916 / DSM 44818 / JCM 13857 / NBRC 105044 / CNB-440).